Consider the following 295-residue polypeptide: Foldase protein PrsA (295 aa).

The first 19 residues, 1–19 (MKKVLIGFASIAMAFTLAA), serve as a signal peptide directing secretion. Cysteine 20 carries the N-palmitoyl cysteine lipid modification. Cysteine 20 is lipidated: S-diacylglycerol cysteine. Residues 136–229 (EPKVTVAQIL…YGYQVIKMIN (94 aa)) form the PpiC domain.

This sequence belongs to the PrsA family.

Its subcellular location is the cell membrane. The enzyme catalyses [protein]-peptidylproline (omega=180) = [protein]-peptidylproline (omega=0). In terms of biological role, plays a major role in protein secretion by helping the post-translocational extracellular folding of several secreted proteins. The chain is Foldase protein PrsA from Pediococcus pentosaceus (strain ATCC 25745 / CCUG 21536 / LMG 10740 / 183-1w).